A 397-amino-acid chain; its full sequence is Multidrug resistance protein MdtH (397 aa).

10 helical membrane passes run 11 to 31 (WFLA…MPMI), 71 to 91 (FGAR…FASL), 94 to 114 (AQSG…GCLF), 137 to 157 (LLMM…SWLL), 163 to 183 (YVCL…LLIL), 211 to 231 (LVLI…IFPI), 242 to 262 (AVGW…YPLA), 291 to 311 (FATT…GIVI), 338 to 358 (LGLA…HDYA), and 366 to 386 (LPWL…VNCF).

Belongs to the major facilitator superfamily. DHA1 family. MdtH (TC 2.A.1.2.21) subfamily.

It localises to the cell inner membrane. In Aeromonas salmonicida (strain A449), this protein is Multidrug resistance protein MdtH.